The primary structure comprises 328 residues: Coiled-coil domain-containing protein 54 (328 aa).

Residues 93–148 (KIQEKTDFFQKQMQVLETKMNVNENKQCATAEDIFSVKEDVDALKKKVTELGNQNS) adopt a coiled-coil conformation. At threonine 182 the chain carries Phosphothreonine.

This is Coiled-coil domain-containing protein 54 (CCDC54) from Bos taurus (Bovine).